The chain runs to 523 residues: Flavonoid 3',5'-hydroxylase (523 aa).

Residue Cys-460 coordinates heme.

The protein belongs to the cytochrome P450 family. It depends on heme as a cofactor.

The catalysed reaction is a 3',5'-unsubstituted flavanone + 2 reduced [NADPH--hemoprotein reductase] + 2 O2 = a 3',5'-dihydroxyflavanone + 2 oxidized [NADPH--hemoprotein reductase] + 2 H2O + 2 H(+). It functions in the pathway pigment biosynthesis; anthocyanin biosynthesis. Its function is as follows. Catalyzes the 3'5'-hydroxylation of naringenin and eriodictyol to form 5,7,3,'4',5'-pentahydroxyflavanone and 3',5'-hydroxylation of dihydrokaempferol and dihydroquercetin to form dihydromyricetin. The polypeptide is Flavonoid 3',5'-hydroxylase (CYP75A6) (Campanula medium (Canterbury bells)).